We begin with the raw amino-acid sequence, 355 residues long: MEDLEETLFEEFENYSYDLDYYSLESDLEEKVQLGVVHWVSLVLYCLAFVLGIPGNAIVIWFTGFKWKKTVTTLWFLNLAIADFIFLLFLPLYISYVAMNFHWPFGIWLCKANSFTAQLNMFASVFFLTVISLDHYIHLIHPVLSHRHRTLKNSLIVIIFIWLLASLIGGPALYFRDTVEFNNHTLCYNNFQKHDPDLTLIRHHVLTWVKFIIGYLFPLLTMSICYLCLIFKVKKRSILISSRHFWTILVVVVAFVVCWTPYHLFSIWELTIHHNSYSHHVMQAGIPLSTGLAFLNSCLNPILYVLISKKFQARFRSSVAEILKYTLWEVSCSGTVSEQLRNSETKNLCLLETAQ.

The Extracellular segment spans residues 1-41; it reads MEDLEETLFEEFENYSYDLDYYSLESDLEEKVQLGVVHWVS. A glycan (N-linked (GlcNAc...) asparagine) is linked at asparagine 14. The helical transmembrane segment at 42–62 threads the bilayer; the sequence is LVLYCLAFVLGIPGNAIVIWF. Residues 63–73 are Cytoplasmic-facing; sequence TGFKWKKTVTT. Residues 74-94 traverse the membrane as a helical segment; that stretch reads LWFLNLAIADFIFLLFLPLYI. Residues 95–112 lie on the Extracellular side of the membrane; it reads SYVAMNFHWPFGIWLCKA. A disulfide bridge links cysteine 110 with cysteine 187. Residues 113-133 form a helical membrane-spanning segment; it reads NSFTAQLNMFASVFFLTVISL. At 134–154 the chain is on the cytoplasmic side; the sequence is DHYIHLIHPVLSHRHRTLKNS. The chain crosses the membrane as a helical span at residues 155-175; it reads LIVIIFIWLLASLIGGPALYF. Over 176-210 the chain is Extracellular; that stretch reads RDTVEFNNHTLCYNNFQKHDPDLTLIRHHVLTWVK. Residues 211 to 231 traverse the membrane as a helical segment; it reads FIIGYLFPLLTMSICYLCLIF. The Cytoplasmic portion of the chain corresponds to 232-247; sequence KVKKRSILISSRHFWT. The helical transmembrane segment at 248–268 threads the bilayer; the sequence is ILVVVVAFVVCWTPYHLFSIW. The Extracellular segment spans residues 269-286; it reads ELTIHHNSYSHHVMQAGI. The helical transmembrane segment at 287–307 threads the bilayer; it reads PLSTGLAFLNSCLNPILYVLI. Residues 308–355 are Cytoplasmic-facing; the sequence is SKKFQARFRSSVAEILKYTLWEVSCSGTVSEQLRNSETKNLCLLETAQ.

Belongs to the chemokine-like receptor (CMKLR) family. Expressed in hippocampus.

The protein localises to the cell membrane. Functionally, receptor for chemoattractant adipokine chemerin/RARRES2 suggesting a role for this receptor in the regulation of inflammation and energy homesotasis. Signals mainly via beta-arrestin pathway. Binding of RARRES2 activates weakly G proteins, calcium mobilization and MAPK1/MAPK3 (ERK1/2) phosphorylation too. Also acts as a receptor for TAFA1, mediates its effects on neuronal stem-cell proliferation and differentiation via the activation of ROCK/ERK and ROCK/STAT3 signaling pathway. (Microbial infection) Coreceptor for HIV-1. The polypeptide is Chemerin-like receptor 2 (Homo sapiens (Human)).